Here is a 635-residue protein sequence, read N- to C-terminus: Thrombopoietin receptor (635 aa).

A signal peptide spans 1–25 (MPSWALFMVTSCLLLAPQNLAQVSS). The Extracellular portion of the chain corresponds to 26-491 (QDVSLLASDS…RVETATETAW (466 aa)). 2 disulfide bridges follow: C40–C50 and C77–C93. 2 N-linked (GlcNAc...) asparagine glycosylation sites follow: N117 and N178. Residues 172–281 (GPRDPKNSTG…WSLPVTVDLP (110 aa)) enclose the Fibronectin type-III 1 domain. Disulfide bonds link C193–C323, C194–C241, C291–C301, and C334–C352. Residues 205–232 (ALDQSPCAQPTMPWQDGPKQTSPSREAS) are disordered. A glycan (N-linked (GlcNAc...) asparagine) is linked at N298. N358 carries an N-linked (GlcNAc...) asparagine glycan. Residues 392–486 (PTPNLHWREI…WSDPTRVETA (95 aa)) enclose the Fibronectin type-III 2 domain. Positions 474 to 478 (WSSWS) match the WSXWS motif motif. Residues 492 to 513 (ISLVTALHLVLGLSAVLGLLLL) form a helical membrane-spanning segment. Residues 514-635 (RWQFPAHYRR…YLPLSYWQQP (122 aa)) lie on the Cytoplasmic side of the membrane. Positions 528-536 (LWPSLPDLH) match the Box 1 motif motif. Residues K553 and K573 each participate in a glycyl lysine isopeptide (Lys-Gly) (interchain with G-Cter in ubiquitin) cross-link. Phosphotyrosine is present on residues Y591, Y626, and Y631.

It belongs to the type I cytokine receptor family. Type 1 subfamily. As to quaternary structure, homodimer. Interacts with ATXN2L. Interacts with JAK2 and TYK2; these interactions increase MPL localization to the cell membrane. Interacts with THPO. Interacts with SHIP/INPP5D. Interacts with BTK. Interacts with SYK; this interaction negatively regulates THPO-mediated ERK1/2 signaling. Post-translationally, phosphorylated at Tyr-591 in response to THPO stimulation. In terms of processing, ubiquitination at Lys-553 and Lys-573 targets MPL for degradation by both the lysosomal and proteasomal pathways. The E3 ubiquitin-protein ligase CBL significantly contributes to this ubiquitination. As to expression, expressed at a low level in a large number of cells of hematopoietic origin. Isoform 1 and isoform 2 are always found to be coexpressed.

It localises to the cell membrane. It is found in the golgi apparatus. Its subcellular location is the cell surface. In terms of biological role, receptor for thrombopoietin that regulates hematopoietic stem cell renewal, megakaryocyte differentiation, and platelet formation. Upon activation by THPO, induces rapid tyrosine phosphorylation and activation of JAK2, providing docking sites for many signaling proteins such as STAT5, SHIP/INPP5D, GRB2, SOS1 and PI3K. In turn, These signaling cascades lead to the proliferation, survival, and differentiation of megakaryocytes, ultimately leading to increased platelet production. This chain is Thrombopoietin receptor (MPL), found in Homo sapiens (Human).